We begin with the raw amino-acid sequence, 167 residues long: MLGITTLAALPLGNMLFIIIAFLLLMLILKKVAYGPLTKVLDERADKISSDIDGAEVARQEAEKLASQRQAELAETRQNATKVVNDAKASAQKQSDLIVSAANDRAASVSQQAQTDAQKLKEDAISGAKNDVAALSVAIASKLMQKELSLNDQQALIDAYISDLETK.

The helical transmembrane segment at 9-29 (ALPLGNMLFIIIAFLLLMLIL) threads the bilayer.

This sequence belongs to the ATPase B chain family. As to quaternary structure, F-type ATPases have 2 components, F(1) - the catalytic core - and F(0) - the membrane proton channel. F(1) has five subunits: alpha(3), beta(3), gamma(1), delta(1), epsilon(1). F(0) has three main subunits: a(1), b(2) and c(10-14). The alpha and beta chains form an alternating ring which encloses part of the gamma chain. F(1) is attached to F(0) by a central stalk formed by the gamma and epsilon chains, while a peripheral stalk is formed by the delta and b chains.

It is found in the cell membrane. In terms of biological role, f(1)F(0) ATP synthase produces ATP from ADP in the presence of a proton or sodium gradient. F-type ATPases consist of two structural domains, F(1) containing the extramembraneous catalytic core and F(0) containing the membrane proton channel, linked together by a central stalk and a peripheral stalk. During catalysis, ATP synthesis in the catalytic domain of F(1) is coupled via a rotary mechanism of the central stalk subunits to proton translocation. Functionally, component of the F(0) channel, it forms part of the peripheral stalk, linking F(1) to F(0). This chain is ATP synthase subunit b, found in Leuconostoc mesenteroides subsp. mesenteroides (strain ATCC 8293 / DSM 20343 / BCRC 11652 / CCM 1803 / JCM 6124 / NCDO 523 / NBRC 100496 / NCIMB 8023 / NCTC 12954 / NRRL B-1118 / 37Y).